Reading from the N-terminus, the 335-residue chain is E3 ubiquitin ligase rnf-121 (335 aa).

Residues 1 to 47 (MGQHGAIRLQNEVQEGMPPPHELTEEEQWAEEHRKMHEKHKGHEAMH) lie on the Cytoplasmic side of the membrane. Residues 48–68 (MEMMVIFMISVIVGQIFLVTW) traverse the membrane as a helical segment. At 69-72 (KRKH) the chain is on the lumenal side. The chain crosses the membrane as a helical span at residues 73–93 (FKSYQMCTLIGMLTIPVYVCF). Residues 94–99 (NRSWYR) are Cytoplasmic-facing. A helical membrane pass occupies residues 100–120 (FLATWLVFCIFSAFIWLKASA). Residues 121-143 (QHISGGTPRFVYKWFLFLHKLSY) are Lumenal-facing. Residues 144–164 (VLGVVGYLIMMGALLGFHVLF) form a helical membrane-spanning segment. The Cytoplasmic segment spans residues 165 to 168 (GVSQ). Residues 169–189 (PTLMDAGILFMFYGVYYGVLG) form a helical membrane-spanning segment. The Lumenal segment spans residues 190-335 (RDFAHICTAR…QGLTTWMGLE (146 aa)). Residues 222–284 (CAVCGGRLDD…GKLQTCPYCK (63 aa)) form an RING-type; atypical zinc finger.

The protein belongs to the RNF121 family. As to expression, expressed in body wall muscles, the hypodermis, seam cells, vulval cells, spermathecal cells, uterine cells and the distal tip cell (at protein level).

The protein localises to the endoplasmic reticulum membrane. The protein resides in the golgi apparatus membrane. It carries out the reaction S-ubiquitinyl-[E2 ubiquitin-conjugating enzyme]-L-cysteine + [acceptor protein]-L-lysine = [E2 ubiquitin-conjugating enzyme]-L-cysteine + N(6)-ubiquitinyl-[acceptor protein]-L-lysine.. It participates in protein modification; protein ubiquitination. Its function is as follows. E3 ubiquitin ligase which accepts ubiquitin and transfers it to substrates such as the beta-integrin subunit pat-3, promoting their degradation by the endoplasmic reticulum-associated degradation (ERAD) pathway which is a pathway involved in ubiquitin-dependent degradation of misfolded endoplasmic reticulum proteins. Negatively regulates the unfolded protein response to reduce endoplasmic reticulum stress. Required for the cessation of distal tip cell migration at the end of larval morphogenesis. Plays a role in germline and gonad development. The protein is E3 ubiquitin ligase rnf-121 of Caenorhabditis elegans.